We begin with the raw amino-acid sequence, 212 residues long: Probable GTP-binding protein EngB (212 aa).

Residues 40–212 form the EngB-type G domain; it reads SLPEIAFVGK…KASLAKCIKA (173 aa). Residues 48–55, 75–79, 93–96, 160–163, and 191–193 each bind GTP; these read GKSNVGKS, GRTRQ, DLPG, TKSD, and VSS. Mg(2+) contacts are provided by serine 55 and threonine 77.

The protein belongs to the TRAFAC class TrmE-Era-EngA-EngB-Septin-like GTPase superfamily. EngB GTPase family. Requires Mg(2+) as cofactor.

Necessary for normal cell division and for the maintenance of normal septation. This chain is Probable GTP-binding protein EngB, found in Rickettsia akari (strain Hartford).